The chain runs to 398 residues: MCYGGTAMMAFADIKEALTPKPSAQLYDVPLLYCMLMLMGVGFVMVTSASMPTADRLFGNIYHFTIRHGIFLALSFCLFWITTSVPMSWWKKANPYLLLVGLGLLLIVLIVGREVNGSTRWIPIGPFNIQASELAKLFFFSYISGYLVRKRSEVQENIKGFIKPILVFAAYAGLILMQPDLGTVVVMFVTTVGLLFLAGAKLWQFFVLILTGVALVIGLIVLEPYRMARVIGFLEPWDDPFGKGYQLVQSLMAYSQGDWFGQGLGNSVQKLQYLPEAHTDFIFAVIAEELGFVGVSSILIVLGTLVFRALLIGQNALKNGKEYEGYLALAIGIWFAFQTMVNVGASAGILPTKGLTLPFISYGGSSLLMMTIAAGILLRVDFETKMATKQATSGGAKR.

At 1-25 (MCYGGTAMMAFADIKEALTPKPSAQ) the chain is on the cytoplasmic side. Residues 26–46 (LYDVPLLYCMLMLMGVGFVMV) traverse the membrane as a helical segment. At 47–69 (TSASMPTADRLFGNIYHFTIRHG) the chain is on the periplasmic side. A helical membrane pass occupies residues 70–90 (IFLALSFCLFWITTSVPMSWW). A topological domain (cytoplasmic) is located at residue Lys91. Residues 92 to 112 (KANPYLLLVGLGLLLIVLIVG) traverse the membrane as a helical segment. At 113–120 (REVNGSTR) the chain is on the periplasmic side. A helical membrane pass occupies residues 121–141 (WIPIGPFNIQASELAKLFFFS). Topologically, residues 142-156 (YISGYLVRKRSEVQE) are cytoplasmic. The chain crosses the membrane as a helical span at residues 157 to 177 (NIKGFIKPILVFAAYAGLILM). Residues 178–179 (QP) are Periplasmic-facing. Residues 180-200 (DLGTVVVMFVTTVGLLFLAGA) traverse the membrane as a helical segment. Position 201 (Lys201) is a topological domain, cytoplasmic. The chain crosses the membrane as a helical span at residues 202-222 (LWQFFVLILTGVALVIGLIVL). At 223 to 289 (EPYRMARVIG…DFIFAVIAEE (67 aa)) the chain is on the periplasmic side. The helical transmembrane segment at 290–312 (LGFVGVSSILIVLGTLVFRALLI) threads the bilayer. Over 313 to 324 (GQNALKNGKEYE) the chain is Cytoplasmic. Residues 325–345 (GYLALAIGIWFAFQTMVNVGA) form a helical membrane-spanning segment. At 346–356 (SAGILPTKGLT) the chain is on the periplasmic side. Residues 357–377 (LPFISYGGSSLLMMTIAAGIL) traverse the membrane as a helical segment. At 378 to 398 (LRVDFETKMATKQATSGGAKR) the chain is on the cytoplasmic side.

Belongs to the SEDS family. FtsW subfamily.

It localises to the cell inner membrane. It catalyses the reaction [GlcNAc-(1-&gt;4)-Mur2Ac(oyl-L-Ala-gamma-D-Glu-L-Lys-D-Ala-D-Ala)](n)-di-trans,octa-cis-undecaprenyl diphosphate + beta-D-GlcNAc-(1-&gt;4)-Mur2Ac(oyl-L-Ala-gamma-D-Glu-L-Lys-D-Ala-D-Ala)-di-trans,octa-cis-undecaprenyl diphosphate = [GlcNAc-(1-&gt;4)-Mur2Ac(oyl-L-Ala-gamma-D-Glu-L-Lys-D-Ala-D-Ala)](n+1)-di-trans,octa-cis-undecaprenyl diphosphate + di-trans,octa-cis-undecaprenyl diphosphate + H(+). Its pathway is cell wall biogenesis; peptidoglycan biosynthesis. Peptidoglycan polymerase that is essential for cell division. The sequence is that of Probable peptidoglycan glycosyltransferase FtsW from Pseudoalteromonas translucida (strain TAC 125).